The chain runs to 429 residues: Probable M18 family aminopeptidase 2 (429 aa).

Residues histidine 82, histidine 156, and histidine 401 each coordinate Zn(2+).

This sequence belongs to the peptidase M18 family. It depends on Zn(2+) as a cofactor.

This chain is Probable M18 family aminopeptidase 2, found in Pseudomonas aeruginosa (strain LESB58).